The primary structure comprises 281 residues: Deoxyribonuclease-1 (281 aa).

An N-terminal signal peptide occupies residues 1 to 21 (MRSEMLTALLTLAVLLQVAGS). Asparagine 39 carries an N-linked (GlcNAc...) asparagine glycan. Glutamate 99 is a catalytic residue. Cysteines 122 and 125 form a disulfide. Residue histidine 155 is part of the active site.

It belongs to the DNase I family. The cofactor is Ca(2+). Mg(2+) is required as a cofactor. As to expression, equivalent levels in pancreas and parotid gland, low amounts in kidney, liver, small intestine, stomach and thymus.

The protein localises to the secreted. It is found in the zymogen granule. Its subcellular location is the nucleus envelope. It catalyses the reaction Endonucleolytic cleavage to 5'-phosphodinucleotide and 5'-phosphooligonucleotide end-products.. In terms of biological role, serum endocuclease secreted into body fluids by a wide variety of exocrine and endocrine organs. Expressed by non-hematopoietic tissues and preferentially cleaves protein-free DNA. Among other functions, seems to be involved in cell death by apoptosis. Binds specifically to G-actin and blocks actin polymerization. Preferentially attacks double-stranded DNA and produces oligonucleotides with 5'-phospho and 3'-hydroxy termini. Together with DNASE1L3, plays a key role in degrading neutrophil extracellular traps (NETs). NETs are mainly composed of DNA fibers and are released by neutrophils to bind pathogens during inflammation. Degradation of intravascular NETs by DNASE1 and DNASE1L3 is required to prevent formation of clots that obstruct blood vessels and cause organ damage following inflammation. The sequence is that of Deoxyribonuclease-1 (DNASE1) from Oryctolagus cuniculus (Rabbit).